Consider the following 117-residue polypeptide: Large ribosomal subunit protein bL19 (117 aa).

It belongs to the bacterial ribosomal protein bL19 family.

Its function is as follows. This protein is located at the 30S-50S ribosomal subunit interface and may play a role in the structure and function of the aminoacyl-tRNA binding site. This Blochmanniella floridana protein is Large ribosomal subunit protein bL19.